Consider the following 397-residue polypeptide: Subtilisin-like protease 3 (397 aa).

Positions 1-19 (MGCIKVISVFLAAVAAVDA) are cleaved as a signal peptide. A propeptide spanning residues 20 to 116 (RAFFHNRGGN…VEHDRVVKLA (97 aa)) is cleaved from the precursor. The region spanning 35–116 (SYIVVMKDGV…VEHDRVVKLA (82 aa)) is the Inhibitor I9 domain. The Peptidase S8 domain occupies 126–397 (TWGLGRVSHK…NKLLYNGSGR (272 aa)). Residues Asp158 and His189 each act as charge relay system in the active site. N-linked (GlcNAc...) asparagine glycosylation is present at Asn250. The active-site Charge relay system is Ser344. Asn393 is a glycosylation site (N-linked (GlcNAc...) asparagine).

It belongs to the peptidase S8 family.

The protein localises to the secreted. Its function is as follows. Secreted subtilisin-like serine protease with keratinolytic activity that contributes to pathogenicity. The protein is Subtilisin-like protease 3 (SUB3) of Arthroderma otae (strain ATCC MYA-4605 / CBS 113480) (Microsporum canis).